The sequence spans 362 residues: Histidinol-phosphate aminotransferase (362 aa).

K219 is modified (N6-(pyridoxal phosphate)lysine).

This sequence belongs to the class-II pyridoxal-phosphate-dependent aminotransferase family. Histidinol-phosphate aminotransferase subfamily. In terms of assembly, homodimer. Pyridoxal 5'-phosphate serves as cofactor.

It carries out the reaction L-histidinol phosphate + 2-oxoglutarate = 3-(imidazol-4-yl)-2-oxopropyl phosphate + L-glutamate. It participates in amino-acid biosynthesis; L-histidine biosynthesis; L-histidine from 5-phospho-alpha-D-ribose 1-diphosphate: step 7/9. This is Histidinol-phosphate aminotransferase from Maricaulis maris (strain MCS10) (Caulobacter maris).